A 243-amino-acid chain; its full sequence is 3-deoxy-manno-octulosonate cytidylyltransferase (243 aa).

It belongs to the KdsB family.

Its subcellular location is the cytoplasm. The enzyme catalyses 3-deoxy-alpha-D-manno-oct-2-ulosonate + CTP = CMP-3-deoxy-beta-D-manno-octulosonate + diphosphate. It participates in nucleotide-sugar biosynthesis; CMP-3-deoxy-D-manno-octulosonate biosynthesis; CMP-3-deoxy-D-manno-octulosonate from 3-deoxy-D-manno-octulosonate and CTP: step 1/1. It functions in the pathway bacterial outer membrane biogenesis; lipopolysaccharide biosynthesis. In terms of biological role, activates KDO (a required 8-carbon sugar) for incorporation into bacterial lipopolysaccharide in Gram-negative bacteria. This chain is 3-deoxy-manno-octulosonate cytidylyltransferase, found in Helicobacter pylori (strain HPAG1).